The sequence spans 119 residues: Large ribosomal subunit protein uL22 (119 aa).

This sequence belongs to the universal ribosomal protein uL22 family. In terms of assembly, part of the 50S ribosomal subunit.

Functionally, this protein binds specifically to 23S rRNA; its binding is stimulated by other ribosomal proteins, e.g. L4, L17, and L20. It is important during the early stages of 50S assembly. It makes multiple contacts with different domains of the 23S rRNA in the assembled 50S subunit and ribosome. In terms of biological role, the globular domain of the protein is located near the polypeptide exit tunnel on the outside of the subunit, while an extended beta-hairpin is found that lines the wall of the exit tunnel in the center of the 70S ribosome. The polypeptide is Large ribosomal subunit protein uL22 (Rickettsia rickettsii (strain Iowa)).